The chain runs to 480 residues: Radical SAM Nalpha-GlyT isomerase (480 aa).

3 residues coordinate iron-sulfur cluster: Cys125, Cys129, and Cys132. Residues 457–480 form a disordered region; that stretch reads KIVEPTPPEEDGGERKIIPITQID.

It catalyses the reaction 5-N(alpha)-glycyl-dTMP in DNA + AH2 + S-adenosyl-L-methionine = 5-C(alpha)-glycyl-dTMP in DNA + 5'-deoxyadenosine + L-methionine + A + H(+). Functionally, isomerizes 5-N-alpha-glycinylthymidine (Nalpha-GlyT) into 5-Calpha-glycinylthymidine (Calpha-GlyT) as a step in the pathway leading to thymidine hypermodifications in the viral genome. As a final result of the pathway of hypermodification, 5-aminoethyl-2'-deoxyuridine (5-NedU) substitutes for about 30% of thymidines in the viral DNA. These modifications probably prevent degradation of viral genome by the host restriction-modification antiviral defense system. This is Radical SAM Nalpha-GlyT isomerase from Pseudomonas phage M6.